Here is a 218-residue protein sequence, read N- to C-terminus: Methylthioribulose-1-phosphate dehydratase (218 aa).

Residues histidine 107 and histidine 109 each contribute to the Zn(2+) site.

It belongs to the aldolase class II family. MtnB subfamily. The cofactor is Zn(2+).

The enzyme catalyses 5-(methylsulfanyl)-D-ribulose 1-phosphate = 5-methylsulfanyl-2,3-dioxopentyl phosphate + H2O. It functions in the pathway amino-acid biosynthesis; L-methionine biosynthesis via salvage pathway; L-methionine from S-methyl-5-thio-alpha-D-ribose 1-phosphate: step 2/6. Its function is as follows. Catalyzes the dehydration of methylthioribulose-1-phosphate (MTRu-1-P) into 2,3-diketo-5-methylthiopentyl-1-phosphate (DK-MTP-1-P). The protein is Methylthioribulose-1-phosphate dehydratase of Xylella fastidiosa (strain M12).